Consider the following 686-residue polypeptide: Pentatricopeptide repeat-containing protein 1, mitochondrial (686 aa).

Positions 55 to 67 (RMSSLCSDSSTPV) are enriched in polar residues. The segment at 55–79 (RMSSLCSDSSTPVAPQEEEEEESFG) is disordered. PPR repeat units follow at residues 124–160 (TPYWYFLQCKRLLKEGKLAEALDLFERQMLKEERLQP), 161–195 (LECNYTVLIGGCGRVGYLKKAFRLFNDMKKRDLEP), 196–234 (SDATYTALFNVCAESPWKDSALQSALKLRQQLQAQNFQL), 235–269 (NLKTYHALLKVAAKCADLRVCLEVFKEIIQKGHAV), and 270–306 (TEETFCFLLMGCIQDKKTGFRQAMQVWRQMLSLGIKP). The disordered stretch occupies residues 383–407 (KLEGPPAFPEARETSRTQPEVETKA). Residues 392 to 407 (EARETSRTQPEVETKA) are compositionally biased toward basic and acidic residues. 2 PPR repeats span residues 508 to 542 (DITFFNTLIRKKSKLGDLEGAKALLPILAKKGIVP) and 575 to 609 (NTHIYSTLINAALKKLDYTYLISILKDMRRNSVPV).

This sequence belongs to the PTCD1 family. As to quaternary structure, associates with mitochondrial leucine tRNAs. Interacts with ELAC2.

It is found in the mitochondrion matrix. Functionally, mitochondrial protein implicated in negative regulation of leucine tRNA levels, as well as negative regulation of mitochondria-encoded proteins and COX activity. Also affects the 3'-processing of mitochondrial tRNAs. The protein is Pentatricopeptide repeat-containing protein 1, mitochondrial (Ptcd1) of Rattus norvegicus (Rat).